The chain runs to 397 residues: NADH-quinone oxidoreductase subunit H 1 (397 aa).

The next 10 membrane-spanning stretches (helical) occupy residues 7 to 27 (FIFI…TTLA), 84 to 104 (PFLA…GPVI), 120 to 140 (IGVL…ALAG), 156 to 176 (SAQM…PLLI), 198 to 218 (LLSG…AAFA), 258 to 278 (MITV…APWP), 279 to 299 (AAYG…LVLL), 313 to 333 (TFPA…LPMV), 337 to 357 (LLPL…FMWI), and 376 to 396 (FLFP…AWTT).

Belongs to the complex I subunit 1 family. NDH-1 is composed of 14 different subunits. Subunits NuoA, H, J, K, L, M, N constitute the membrane sector of the complex.

It localises to the cell inner membrane. It carries out the reaction a quinone + NADH + 5 H(+)(in) = a quinol + NAD(+) + 4 H(+)(out). In terms of biological role, NDH-1 shuttles electrons from NADH, via FMN and iron-sulfur (Fe-S) centers, to quinones in the respiratory chain. The immediate electron acceptor for the enzyme in this species is believed to be ubiquinone. Couples the redox reaction to proton translocation (for every two electrons transferred, four hydrogen ions are translocated across the cytoplasmic membrane), and thus conserves the redox energy in a proton gradient. This subunit may bind ubiquinone. The polypeptide is NADH-quinone oxidoreductase subunit H 1 (Solibacter usitatus (strain Ellin6076)).